Reading from the N-terminus, the 73-residue chain is Stigmurin (73 aa).

A signal peptide spans 1-22 (MQIKHLITLFFLVLIVADQCSA). A Lysine amide modification is found at Lys-39. A propeptide spanning residues 45–73 (EISAQIEQYKDLQKREAELEKLLDRLPMY) is cleaved from the precursor.

This sequence belongs to the non-disulfide-bridged peptide (NDBP) superfamily. Short antimicrobial peptide (group 4) family. Expressed by the venom gland.

It is found in the secreted. Antimicrobial peptide with activity against Gram-positive bacterial strains (S.aureus (MIC=2-140 uM), methicillin-resistant S.aureus (MRSA) (MIC=8-17 uM), S.epidermidis (MIC=1.17 uM), and the yeasts C.albicans, C.krusei, and C.glabrata (MIC=34-69 uM)). Acts by disrupting the cell membrane (observed on outer layer of the S.aureus). Is not active against Gram-negative bacteria (E.coli, E.Cloacae, P.aeruginosa), and the Gram-positive bacterium E.faecalis. Also shows toxicity against several cell lines, but possess low hemolytic activity at the highest concentration tested. Also shows antiparasitic activity against Trypanosoma cruzi by decreasing the viability of the epimastigote and trypomastigote forms of the parasite. Displays high hydroxyl radical scavenging activity (antioxidant action). In a wound infection model, the topical application of this peptide demonstrates antibacterial effects, as well as an ability to accelerate wound closure speed, which suggests the induction of tissue repair. In the model of polymicrobial sepsis, it exhibits an antibiotic effect, reducing the levels of microorganisms in the infectious focus and the inflammatory responses in the lung and cecum of septic animals. This is Stigmurin from Tityus stigmurus (Brazilian scorpion).